Consider the following 493-residue polypeptide: UDP-N-acetylmuramoyl-L-alanyl-D-glutamate--2,6-diaminopimelate ligase (493 aa).

Threonine 32 contributes to the UDP-N-acetyl-alpha-D-muramoyl-L-alanyl-D-glutamate binding site. 110–116 contacts ATP; it reads GTNGKTT. Residues asparagine 151, 152–153, serine 179, and arginine 187 contribute to the UDP-N-acetyl-alpha-D-muramoyl-L-alanyl-D-glutamate site; that span reads TT. At lysine 219 the chain carries N6-carboxylysine. Residues arginine 386, 410–413, glycine 460, and glutamate 464 contribute to the meso-2,6-diaminopimelate site; that span reads DNPR. The Meso-diaminopimelate recognition motif motif lies at 410–413; the sequence is DNPR.

It belongs to the MurCDEF family. MurE subfamily. Mg(2+) serves as cofactor. Carboxylation is probably crucial for Mg(2+) binding and, consequently, for the gamma-phosphate positioning of ATP.

The protein localises to the cytoplasm. The enzyme catalyses UDP-N-acetyl-alpha-D-muramoyl-L-alanyl-D-glutamate + meso-2,6-diaminopimelate + ATP = UDP-N-acetyl-alpha-D-muramoyl-L-alanyl-gamma-D-glutamyl-meso-2,6-diaminopimelate + ADP + phosphate + H(+). The protein operates within cell wall biogenesis; peptidoglycan biosynthesis. In terms of biological role, catalyzes the addition of meso-diaminopimelic acid to the nucleotide precursor UDP-N-acetylmuramoyl-L-alanyl-D-glutamate (UMAG) in the biosynthesis of bacterial cell-wall peptidoglycan. The protein is UDP-N-acetylmuramoyl-L-alanyl-D-glutamate--2,6-diaminopimelate ligase of Lactiplantibacillus plantarum (strain ATCC BAA-793 / NCIMB 8826 / WCFS1) (Lactobacillus plantarum).